The sequence spans 100 residues: Urease subunit gamma (100 aa).

This sequence belongs to the urease gamma subunit family. In terms of assembly, heterotrimer of UreA (gamma), UreB (beta) and UreC (alpha) subunits. Three heterotrimers associate to form the active enzyme.

It is found in the cytoplasm. It catalyses the reaction urea + 2 H2O + H(+) = hydrogencarbonate + 2 NH4(+). The protein operates within nitrogen metabolism; urea degradation; CO(2) and NH(3) from urea (urease route): step 1/1. In Micrococcus luteus (strain ATCC 4698 / DSM 20030 / JCM 1464 / CCM 169 / CCUG 5858 / IAM 1056 / NBRC 3333 / NCIMB 9278 / NCTC 2665 / VKM Ac-2230) (Micrococcus lysodeikticus), this protein is Urease subunit gamma.